A 201-amino-acid chain; its full sequence is 3-isopropylmalate dehydratase small subunit (201 aa).

Belongs to the LeuD family. LeuD type 1 subfamily. As to quaternary structure, heterodimer of LeuC and LeuD.

The enzyme catalyses (2R,3S)-3-isopropylmalate = (2S)-2-isopropylmalate. It participates in amino-acid biosynthesis; L-leucine biosynthesis; L-leucine from 3-methyl-2-oxobutanoate: step 2/4. In terms of biological role, catalyzes the isomerization between 2-isopropylmalate and 3-isopropylmalate, via the formation of 2-isopropylmaleate. This chain is 3-isopropylmalate dehydratase small subunit, found in Shewanella denitrificans (strain OS217 / ATCC BAA-1090 / DSM 15013).